A 202-amino-acid polypeptide reads, in one-letter code: LexA repressor (202 aa).

A DNA-binding region (H-T-H motif) is located at residues 28–48; sequence RAEIAQQLGFRSPNAAEEHLK. Residues S119 and K156 each act as for autocatalytic cleavage activity in the active site.

It belongs to the peptidase S24 family. In terms of assembly, homodimer.

It carries out the reaction Hydrolysis of Ala-|-Gly bond in repressor LexA.. Represses a number of genes involved in the response to DNA damage (SOS response), including recA and lexA. Binds to the 16 bp palindromic sequence 5'-CTGTATATATATACAG-3'. In the presence of single-stranded DNA, RecA interacts with LexA causing an autocatalytic cleavage which disrupts the DNA-binding part of LexA, leading to derepression of the SOS regulon and eventually DNA repair. This is LexA repressor from Pectobacterium carotovorum subsp. carotovorum (Erwinia carotovora subsp. carotovora).